We begin with the raw amino-acid sequence, 180 residues long: O-acetyl-ADP-ribose deacetylase (180 aa).

The region spanning 1–175 (MSGRINVVQG…LYQRLLGQYD (175 aa)) is the Macro domain. Substrate is bound by residues 11-12 (DI), Asn-25, 33-35 (GVD), and 122-126 (STGIY). The active-site Proton acceptor is the Asp-35.

The protein belongs to the MacroD-type family. YmdB subfamily. In terms of assembly, homodimer. Interacts with RNase III.

The catalysed reaction is 3''-O-acetyl-ADP-D-ribose + H2O = ADP-D-ribose + acetate + H(+). The enzyme catalyses 2''-O-acetyl-ADP-D-ribose + H2O = ADP-D-ribose + acetate + H(+). Functionally, deacetylates O-acetyl-ADP ribose to yield ADP-ribose and free acetate. Down-regulates ribonuclease 3 (RNase III) activity. Acts by interacting directly with the region of the ribonuclease that is required for dimerization/activation. The polypeptide is O-acetyl-ADP-ribose deacetylase (Cronobacter sakazakii (strain ATCC BAA-894) (Enterobacter sakazakii)).